A 415-amino-acid chain; its full sequence is DNA polymerase IV (415 aa).

One can recognise a UmuC domain in the interval 15-196 (ILHVDMNCFF…LSVEAMHGIG (182 aa)). Aspartate 19 and aspartate 115 together coordinate Mg(2+). Glutamate 116 is an active-site residue. Residues 235–246 (KRAKGTDDREVD) are compositionally biased toward basic and acidic residues. Residues 235-260 (KRAKGTDDREVDPSQMGQHKSVGNSM) are disordered. Residues 249–260 (QMGQHKSVGNSM) show a composition bias toward polar residues.

It belongs to the DNA polymerase type-Y family. Monomer. Mg(2+) serves as cofactor.

It is found in the cytoplasm. The catalysed reaction is DNA(n) + a 2'-deoxyribonucleoside 5'-triphosphate = DNA(n+1) + diphosphate. In terms of biological role, poorly processive, error-prone DNA polymerase involved in untargeted mutagenesis. Copies undamaged DNA at stalled replication forks, which arise in vivo from mismatched or misaligned primer ends. These misaligned primers can be extended by PolIV. Exhibits no 3'-5' exonuclease (proofreading) activity. May be involved in translesional synthesis, in conjunction with the beta clamp from PolIII. The chain is DNA polymerase IV from Bacillus cereus (strain ATCC 14579 / DSM 31 / CCUG 7414 / JCM 2152 / NBRC 15305 / NCIMB 9373 / NCTC 2599 / NRRL B-3711).